The following is a 209-amino-acid chain: Uracil phosphoribosyltransferase (209 aa).

5-phospho-alpha-D-ribose 1-diphosphate contacts are provided by residues R79, R104, and 131 to 139 (DPMLATGNS). Uracil is bound by residues I194 and 199-201 (GDA). D200 lines the 5-phospho-alpha-D-ribose 1-diphosphate pocket.

This sequence belongs to the UPRTase family. The cofactor is Mg(2+).

The enzyme catalyses UMP + diphosphate = 5-phospho-alpha-D-ribose 1-diphosphate + uracil. It participates in pyrimidine metabolism; UMP biosynthesis via salvage pathway; UMP from uracil: step 1/1. Its activity is regulated as follows. Allosterically activated by GTP. Functionally, catalyzes the conversion of uracil and 5-phospho-alpha-D-ribose 1-diphosphate (PRPP) to UMP and diphosphate. This Rhizobium rhizogenes (strain K84 / ATCC BAA-868) (Agrobacterium radiobacter) protein is Uracil phosphoribosyltransferase.